Consider the following 294-residue polypeptide: uncharacterized protein (294 aa).

Positions 1–32 (MSHLKDPTTQYYTGEYPKQKQPTPGIQAKMTP) are disordered. Lysine 39 is subject to N6-acetyllysine. 53-77 (LVTGGDSGIGRAAAIAYAREGADVA) contributes to the NADP(+) binding site. Serine 186 contributes to the substrate binding site. Residue tyrosine 199 is the Proton acceptor of the active site.

This sequence belongs to the short-chain dehydrogenases/reductases (SDR) family.

This is an uncharacterized protein from Escherichia coli (strain K12).